The primary structure comprises 436 residues: GTPase Der (436 aa).

2 consecutive EngA-type G domains span residues 4-167 (PTVA…PVEE) and 175-351 (IRFS…ESQN). GTP contacts are provided by residues 10-17 (GRPNVGKS), 57-61 (DTGGI), 119-122 (NKVD), 181-188 (GRPNVGKS), 229-233 (DTAGM), and 294-297 (NKWD). Residues 352-436 (KRIPSAVLND…PIHLIARKRK (85 aa)) form the KH-like domain.

It belongs to the TRAFAC class TrmE-Era-EngA-EngB-Septin-like GTPase superfamily. EngA (Der) GTPase family. Associates with the 50S ribosomal subunit.

Functionally, GTPase that plays an essential role in the late steps of ribosome biogenesis. The protein is GTPase Der of Streptococcus uberis (strain ATCC BAA-854 / 0140J).